The chain runs to 145 residues: Regulator of sigma D (145 aa).

It belongs to the Rsd/AlgQ family. In terms of assembly, interacts with RpoD.

The protein localises to the cytoplasm. Binds RpoD and negatively regulates RpoD-mediated transcription activation by preventing the interaction between the primary sigma factor RpoD with the catalytic core of the RNA polymerase and with promoter DNA. May be involved in replacement of the RNA polymerase sigma subunit from RpoD to RpoS during the transition from exponential growth to the stationary phase. In Sodalis glossinidius (strain morsitans), this protein is Regulator of sigma D.